A 168-amino-acid polypeptide reads, in one-letter code: Vitelline membrane protein Vm26Ab (168 aa).

Positions 1-23 (MAFNFGHLLIAGLVALSAVSSET) are cleaved as a signal peptide. Residues 24-42 (IQLQPTQGILIPAPLAENI) constitute a propeptide, removed between stage 11 and 14 of oogenesis. The segment at 43-46 (RVSR) is essential for N-terminal propeptide removal. Potential serine protease cleavage site. Residues 52–119 (YGAAPAAPSY…PAYSAPASIP (68 aa)) form an 8 X 8 AA approximate repeats of P-[AS]-Y-S-A-P-A-[AS] region. The stretch at 55 to 58 (APAA) is one 1; half-length repeat. Repeat 2 spans residues 59–66 (PSYSAPAA). One copy of the 3; approximate repeat lies at 70–77 (QAYSAPAA). Tandem repeats lie at residues 78-85 (PAYSAPAA), 86-93 (PAYSAPAA), 94-101 (PAYSAPAA), 102-109 (PAYSAPAA), and 110-117 (PAYSAPAS). Positions 117 to 154 (SIPSPPCPKNYLFSCQPSLQPVPCSAPAQSYGSAGAYS) constitute a VM domain. A propeptide spans 155–168 (QYVPQYAVPFVREL) (removed between stage 9 and 12 of oogenesis).

Belongs to the vitelline membrane protein family. In terms of assembly, interacts with vml and Vm26Aa; forms part of a disulfide-linked network within the vitelline membrane of stage 10 egg chambers. In terms of processing, proteolytically processed after secretion into the perivitelline space. Undergoes several proteolytic processing steps during formation of the vitelline membrane; an initial processing step removing a C-terminal propeptide occurs between stage 9 and 12 of oogenesis while a second removing a N-terminal propeptide occurs between stage 11 and 14. Becomes part of a disulfide-linked network including other vitelline membrane proteins, including vml and Vm26Aa, during vitelline membrane biogenesis and maturation. Cys-123, Cys-131 and Cys-140 are involved in disulfide network formation, with Cys-131 being the most important. Undergoes both disulfide and non-disulfide cross-linking upon incorporation into the vitelline membrane. As to expression, follicle cells.

The protein resides in the secreted. It is found in the extracellular space. The protein localises to the extracellular matrix. Major early eggshell protein secreted by follicle cells into the perivitelline space and incorporated into the vitelline membrane. Involved in vitelline membrane biogenesis; forms a cross-linked network with other vitelline membrane components. The chain is Vitelline membrane protein Vm26Ab from Drosophila melanogaster (Fruit fly).